Consider the following 339-residue polypeptide: Glyoxylate reductase (339 aa).

Residues 157–160 (LGRI) and 239–241 (TAR) each bind NADP(+). Residues Arg-241 and Glu-270 contribute to the active site. The active-site Proton donor is the His-289. 289-291 (HIA) provides a ligand contact to NADP(+).

Belongs to the D-isomer specific 2-hydroxyacid dehydrogenase family. GyaR subfamily. In terms of assembly, homodimer.

The protein localises to the cytoplasm. The catalysed reaction is glycolate + NAD(+) = glyoxylate + NADH + H(+). This is Glyoxylate reductase from Thermofilum pendens (strain DSM 2475 / Hrk 5).